The following is a 1390-amino-acid chain: MEVLMAERADLVFHNKAIDGTAMKRLISRLIDHFGMAYTSHILDQVKTLGFQQATATSISLGIDDLLTIPSKGWLVQDAEQQSLTLEKNHHYGNVHAVEKLRQSIEIWYATSEYLRQEMNPNFRMTDPSNPVHIMSFSGARGNASQVHQLVGMRGLMSDPQGQMIDLPIQSNLREGLSLTEYIISCYGARKGVVDTAVRTSDAGYLTRRLVEVVQHIVVRRTDCGTIRRISVSPQNGMTEKIFIQTLIGRVLADDIYIGPRCIATRNQDIGIGLINRFITFRAQPIYIRTPFTCRSTSWICRLCYGRSPTHGDLVELGEAVGIIAGQSIGEPGTQLTLRTFHTGGVFTGGTAEHVRAPSNGKIKFNEDLVHPTRTRHGHPAFLCYIDLYVTIESQSIIHNVNIPPKSLILVQNDQYVESEQVIAEIRTGASTFHFKERVRKHIYSDSQGEMHWSTDVYHAPEYTYGNVHLLPKTSHLWILSGGPCRSSIVPFSIQKDQDQINVNSLFVEQRYISDLSVTNDRVRHKIFSSDPSGQKGGRIFDYDSGPDRIVSNSQFLYPAIPHENSDLLAKRRRNRFLIPFQYDQEQEKELMCPYGISTEIPINGILRRNSILAYFDDPRYRRSSSGITKYATIEVDSIVKKEDLIEYRGSKEFRPKYQTKVDRFFFIPEEVHILPGSSSIMVRNNSIIGVDTRITLNIRSRVGGLVRVERKKKRIELKIFSGDIHFPGETDKISRHSGILIPPGVVKKNSKKSKKKWKNWIYIQRITPTKKKYFVSVRPVVTYEIADGINLPTLFPQDLLQERDNMQLQVVNYIISGNGKPSRGIPQTSIQLVRTCLVLNWDQDLKGSLEEIHASFVEVRTNDLIRDFIRIDLVKSPISYTGKRNDTWGSGLNPDSISDCTNINPFYSKARLPSFTQPKGTVRTLRNKEYQSLIILSSSDCYQIGPFKDSKYNKTTNCHNITKELIKEDSPVPISNSLGPLGAVPKFLNFDSFSHLITHNQILLKKYLLLDNLKHTSQVMKYFLLDENGKIHNTDPCRNIFFNPSHLNWYSLHHDFFYETPITISLGQFICENVYIFEYGPHIKSGQVLIVQFDSLVIRSAKPHLATPGATVHGHYGEILYEGDTLVTFIYEKSRSGDITQGLPKVEQVLEVRSIDSISLNLEKRVEGWNERVTRILGIPWGFLIGAELTIAQSCISLVNKIQKVYRSQGVQIHNRHIEIVVRQITSKVLVSEDGMSNVFSPGELIGLLRAERTGRALEEAIRYRAILVGITRASLNTQSFISEASFQETARVLAKAALRGRIDWLKGLKENVVLGGMIPVGTGFKGLVHHSRQHNNIPLEIKKRNLFEFEGEMGDILFHHRQSFGSCIQKTFHETSEQSFGFGRFNDS.

Residues Cys-224, Cys-294, Cys-301, and Cys-304 each contribute to the Zn(2+) site.

It belongs to the RNA polymerase beta' chain family. RpoC2 subfamily. In plastids the minimal PEP RNA polymerase catalytic core is composed of four subunits: alpha, beta, beta', and beta''. When a (nuclear-encoded) sigma factor is associated with the core the holoenzyme is formed, which can initiate transcription. Zn(2+) serves as cofactor.

The protein localises to the plastid. It localises to the chloroplast. The catalysed reaction is RNA(n) + a ribonucleoside 5'-triphosphate = RNA(n+1) + diphosphate. Its function is as follows. DNA-dependent RNA polymerase catalyzes the transcription of DNA into RNA using the four ribonucleoside triphosphates as substrates. This Ceratophyllum demersum (Rigid hornwort) protein is DNA-directed RNA polymerase subunit beta''.